The following is a 387-amino-acid chain: Galactokinase (387 aa).

Residue 32–35 participates in substrate binding; the sequence is EHTD. ATP contacts are provided by residues Ser-66 and 123–129; that span reads GAGLSSS. Mg(2+) contacts are provided by Ser-129 and Glu-161. Asp-173 serves as the catalytic Proton acceptor. Residue Tyr-223 coordinates substrate.

Belongs to the GHMP kinase family. GalK subfamily.

It is found in the cytoplasm. The enzyme catalyses alpha-D-galactose + ATP = alpha-D-galactose 1-phosphate + ADP + H(+). It participates in carbohydrate metabolism; galactose metabolism. In terms of biological role, catalyzes the transfer of the gamma-phosphate of ATP to D-galactose to form alpha-D-galactose-1-phosphate (Gal-1-P). This chain is Galactokinase, found in Enterococcus faecalis (strain ATCC 700802 / V583).